We begin with the raw amino-acid sequence, 554 residues long: CTP synthase (554 aa).

The amidoligase domain stretch occupies residues 1-279; that stretch reads MTSSRKVRPT…DTFIIRRLGL (279 aa). S21 lines the CTP pocket. A UTP-binding site is contributed by S21. Residues 22-27 and D79 each bind ATP; that span reads SLGKGL. Positions 79 and 153 each coordinate Mg(2+). CTP contacts are provided by residues 160 to 162, 200 to 205, and K236; these read DIE and KTKPTQ. UTP-binding positions include 200 to 205 and K236; that span reads KTKPTQ. The Glutamine amidotransferase type-1 domain occupies 304-553; it reads TVGIVGKYID…VKTALELRVH (250 aa). Position 367 (G367) interacts with L-glutamine. Residue C394 is the Nucleophile; for glutamine hydrolysis of the active site. Residues 395–398, E417, and R478 each bind L-glutamine; that span reads LGLQ. Active-site residues include H526 and E528.

It belongs to the CTP synthase family. As to quaternary structure, homotetramer.

It catalyses the reaction UTP + L-glutamine + ATP + H2O = CTP + L-glutamate + ADP + phosphate + 2 H(+). The catalysed reaction is L-glutamine + H2O = L-glutamate + NH4(+). The enzyme catalyses UTP + NH4(+) + ATP = CTP + ADP + phosphate + 2 H(+). Its pathway is pyrimidine metabolism; CTP biosynthesis via de novo pathway; CTP from UDP: step 2/2. Its activity is regulated as follows. Allosterically activated by GTP, when glutamine is the substrate; GTP has no effect on the reaction when ammonia is the substrate. The allosteric effector GTP functions by stabilizing the protein conformation that binds the tetrahedral intermediate(s) formed during glutamine hydrolysis. Inhibited by the product CTP, via allosteric rather than competitive inhibition. Functionally, catalyzes the ATP-dependent amination of UTP to CTP with either L-glutamine or ammonia as the source of nitrogen. Regulates intracellular CTP levels through interactions with the four ribonucleotide triphosphates. This is CTP synthase from Corynebacterium glutamicum (strain R).